The chain runs to 210 residues: Mitochondrial coenzyme A diphosphatase NUDT8 (210 aa).

Positions 25 to 172 (LRSRPAAAAV…HFSYTLPVFL (148 aa)) constitute a Nudix hydrolase domain. Lysine 70 bears the N6-succinyllysine mark. A Nudix box motif is present at residues 70-91 (KCDPDDQDVIHTALRETQEELG). Mg(2+) contacts are provided by glutamate 85 and glutamate 89. Lysine 96 carries the post-translational modification N6-succinyllysine.

This sequence belongs to the Nudix hydrolase family. As to quaternary structure, monomer. Mg(2+) is required as a cofactor. It depends on Mn(2+) as a cofactor. As to expression, expressed at the highest levels in the kidneys, heart, brown adipose tissue and liver (at protein level). Expressed at lower levels in the brain, skeletal muscle, and white adipose tissue (at protein level).

The protein resides in the mitochondrion. The enzyme catalyses an acyl-CoA + H2O = an acyl-4'-phosphopantetheine + adenosine 3',5'-bisphosphate + 2 H(+). It catalyses the reaction CoA + H2O = (R)-4'-phosphopantetheine + adenosine 3',5'-bisphosphate + 2 H(+). It carries out the reaction acetyl-CoA + H2O = S-acetyl-4'-phosphopantetheine + adenosine 3',5'-bisphosphate + 2 H(+). The catalysed reaction is butanoyl-CoA + H2O = S-butanoyl-4'-phosphopantetheine + adenosine 3',5'-bisphosphate + 2 H(+). The enzyme catalyses hexanoyl-CoA + H2O = hexanoyl-4'-phosphopantetheine + adenosine 3',5'-bisphosphate + 2 H(+). It catalyses the reaction octanoyl-CoA + H2O = S-octanoyl-4'-phosphopantetheine + adenosine 3',5'-bisphosphate + 2 H(+). It carries out the reaction propanoyl-CoA + H2O = propanoyl-4'-phosphopantetheine + adenosine 3',5'-bisphosphate + 2 H(+). The catalysed reaction is malonyl-CoA + H2O = malonyl-4'-phosphopantetheine + adenosine 3',5'-bisphosphate + 2 H(+). The enzyme catalyses succinyl-CoA + H2O = succinyl-4'-phosphopantetheine + adenosine 3',5'-bisphosphate + 2 H(+). It catalyses the reaction a 5'-end CoA-ribonucleoside in mRNA + H2O = a 5'-end phospho-adenosine-phospho-ribonucleoside in mRNA + (R)-4'-phosphopantetheine + 2 H(+). Functionally, acyl-CoA diphosphatase that mediates the hydrolysis of a wide range of CoA and CoA esters yielding 3',5'-ADP and the corresponding 4'-phosphopantetheine derivative as products. Hydrolyzes short- and medium-chain acyl-CoAs, exhibiting the highest activity toward free CoA, hexanoyl-CoA, and octanoyl-CoA and the lowest activity against acetyl-CoA. Exhibits decapping activity towards dpCoA-capped RNAs in vitro. The chain is Mitochondrial coenzyme A diphosphatase NUDT8 (Nudt8) from Mus musculus (Mouse).